The primary structure comprises 197 residues: Lactoylglutathione lyase-like protein terB (197 aa).

Residues Met1 to Gly19 form the signal peptide. 3 N-linked (GlcNAc...) asparagine glycosylation sites follow: Asn82, Asn99, and Asn140.

It belongs to the glyoxalase I family.

Lactoylglutathione lyase-like protein; part of the gene cluster that mediates the biosynthesis of terrein, a fungal metabolite with ecological, antimicrobial, antiproliferative, and antioxidative activities. The first step in the pathway is performed by the polyketide synthase terA that produces 4-hydroxy-6-methylpyranon (4-HMP), orsellinic acid (OA), and 2,3-dehydro-6-hydroxymellein (2,3-dehydro-6-HM) by condensing acetyl-CoA with two, three, or four malonyl-CoA units, respectively. 4-HMP and OA are not pathway intermediates, but are rather shunt or side products. 2,3-dehydro-6-HM is further converted to 6-hydroxymellein (6-HM) by the 6-hydroxymellein synthase terB. The monooxygenases terC and terD, the multicopper oxidase terE and the Kelch-like protein terF are then involved in the transformation of 6-HM to terrein. Even if they are co-regulated with the other terrein cluster genes, terH and terI seem to be dispensable for terrein production; whereas one or both of the 2 transporters terG and terJ are probably required for efficient secretion of metabolites. The protein is Lactoylglutathione lyase-like protein terB of Aspergillus terreus (strain NIH 2624 / FGSC A1156).